A 700-amino-acid chain; its full sequence is Calpain-2 catalytic subunit (700 aa).

The propeptide at 2–19 (AGMAAALAKERAAAAGAG) is anchors to the small subunit. The Calpain catalytic domain occupies 45–344 (LFHDPSFPAG…YSRLEICNLT (300 aa)). 2 residues coordinate Ca(2+): Gly91 and Asp96. Residue Cys105 is part of the active site. Positions 175, 229, and 230 each coordinate Ca(2+). Catalysis depends on residues His262 and Asn286. Ca(2+) is bound by residues Glu292, Asp299, and Glu323. Residues 345–514 (PDTLASDRYK…KNANSTVIDD (170 aa)) are domain III. The tract at residues 515–529 (EIEANFEETEIDEDD) is linker. The segment at 530–700 (IEPSFKKLFG…LINWLFFTVI (171 aa)) is domain IV. 16 residues coordinate Ca(2+): Ala542, Asp545, Glu547, Glu552, Asp585, Asp587, Ser589, Lys591, Glu596, Asp615, Asp617, Ser619, Thr621, Glu626, Asp658, and Asn661. EF-hand domains lie at 572 to 605 (FSIE…TKIQ) and 602 to 637 (TKIQ…AGFK). In terms of domain architecture, EF-hand 3 spans 667–700 (IRLETLYKMFRKLDTEKTGTIELNLINWLFFTVI).

This sequence belongs to the peptidase C2 family. Forms a heterodimer with a small (regulatory) subunit (CAPNS1). Ca(2+) is required as a cofactor. Ubiquitous.

It localises to the cytoplasm. The protein localises to the cell membrane. The enzyme catalyses Broad endopeptidase specificity.. With respect to regulation, activated by 200-1000 micromolar concentrations of calcium and inhibited by calpastatin. Its function is as follows. Calcium-regulated non-lysosomal thiol-protease which catalyze limited proteolysis of substrates involved in cytoskeletal remodeling and signal transduction. The protein is Calpain-2 catalytic subunit (CAPN2) of Gallus gallus (Chicken).